Reading from the N-terminus, the 149-residue chain is Urease accessory protein UreE (149 aa).

It belongs to the UreE family.

Its subcellular location is the cytoplasm. Involved in urease metallocenter assembly. Binds nickel. Probably functions as a nickel donor during metallocenter assembly. This is Urease accessory protein UreE from Corynebacterium efficiens (strain DSM 44549 / YS-314 / AJ 12310 / JCM 11189 / NBRC 100395).